The sequence spans 407 residues: Methylthioribose kinase (407 aa).

ATP contacts are provided by residues Asn40, Lys57, and 111–113; that span reads EDL. Asp229 contributes to the substrate binding site. 246 to 248 is an ATP binding site; it reads DAE. Arg344 lines the substrate pocket.

Belongs to the methylthioribose kinase family. As to quaternary structure, homodimer.

The catalysed reaction is 5-(methylsulfanyl)-D-ribose + ATP = 5-(methylsulfanyl)-alpha-D-ribose 1-phosphate + ADP + H(+). It functions in the pathway amino-acid biosynthesis; L-methionine biosynthesis via salvage pathway; S-methyl-5-thio-alpha-D-ribose 1-phosphate from S-methyl-5'-thioadenosine (hydrolase route): step 2/2. In terms of biological role, catalyzes the phosphorylation of methylthioribose into methylthioribose-1-phosphate. The chain is Methylthioribose kinase from Yersinia pseudotuberculosis serotype O:3 (strain YPIII).